A 430-amino-acid chain; its full sequence is Oleandomycin glycosyltransferase (430 aa).

The tract at residues 385 to 430 is disordered; it reads GGTRRAADLIEAELPARHERQEPVGDRPNVGDRPAGVRSDRQRSAL. A compositionally biased stretch (basic and acidic residues) spans 386–409; it reads GTRRAADLIEAELPARHERQEPVG.

This sequence belongs to the UDP-glycosyltransferase family.

Functionally, specifically inactivates oleandomycin via 2'-O-glycosylation using UDP-glucose. The polypeptide is Oleandomycin glycosyltransferase (oleD) (Streptomyces antibioticus).